The following is a 242-amino-acid chain: 6-phosphogluconolactonase (242 aa).

It belongs to the glucosamine/galactosamine-6-phosphate isomerase family. 6-phosphogluconolactonase subfamily.

It carries out the reaction 6-phospho-D-glucono-1,5-lactone + H2O = 6-phospho-D-gluconate + H(+). The protein operates within carbohydrate degradation; pentose phosphate pathway; D-ribulose 5-phosphate from D-glucose 6-phosphate (oxidative stage): step 2/3. Its function is as follows. Hydrolysis of 6-phosphogluconolactone to 6-phosphogluconate. The sequence is that of 6-phosphogluconolactonase (pgl) from Pseudomonas putida (Arthrobacter siderocapsulatus).